The following is a 429-amino-acid chain: Glutamate-1-semialdehyde 2,1-aminomutase (429 aa).

The residue at position 267 (Lys-267) is an N6-(pyridoxal phosphate)lysine.

The protein belongs to the class-III pyridoxal-phosphate-dependent aminotransferase family. HemL subfamily. Homodimer. Pyridoxal 5'-phosphate serves as cofactor.

The protein localises to the cytoplasm. The catalysed reaction is (S)-4-amino-5-oxopentanoate = 5-aminolevulinate. It participates in porphyrin-containing compound metabolism; protoporphyrin-IX biosynthesis; 5-aminolevulinate from L-glutamyl-tRNA(Glu): step 2/2. The polypeptide is Glutamate-1-semialdehyde 2,1-aminomutase (Xanthomonas oryzae pv. oryzae (strain PXO99A)).